Consider the following 107-residue polypeptide: MRPTQTMLGGGGGAPIGKHNHYLGGWGNFGGMKQRGIISYGISPNRQNPLAGTAHDAVFNTFRRVSSQFLYWAPSLVAGYYIMNWAIERNHYLNSKAGRAEFAGQEE.

The propeptide at 1-8 (MRPTQTML) is plays a role in role in intramitochondrial sorting. The Mitochondrial matrix portion of the chain corresponds to 1–62 (MRPTQTMLGG…TAHDAVFNTF (62 aa)). The helical transmembrane segment at 63–93 (RRVSSQFLYWAPSLVAGYYIMNWAIERNHYL) threads the bilayer. The Mitochondrial intermembrane portion of the chain corresponds to 94 to 107 (NSKAGRAEFAGQEE).

It belongs to the UQCRQ/QCR8 family. As to quaternary structure, component of the ubiquinol-cytochrome c oxidoreductase (cytochrome b-c1 complex, complex III, CIII), a multisubunit enzyme composed of 10 subunits. The complex is composed of 3 respiratory subunits cytochrome b (cob), cytochrome c1 (cyt-1) and Rieske protein (fes-1), 2 core protein subunits pep and ucr-1, and 5 low-molecular weight protein subunits qcr6, qcr7, qcr8, qcr9 and probably NCU16844/qcr10. The complex exists as an obligatory dimer and forms supercomplexes (SCs) in the inner mitochondrial membrane with NADH-ubiquinone oxidoreductase (complex I, CI) and cytochrome c oxidase (complex IV, CIV), resulting in different assemblies (supercomplexes SCI(1)III(2), SCIII(2)IV(1) and SCIII(2)IV(2) as well as higher order I(x)III(y)IV(z) megacomplexes).

Its subcellular location is the mitochondrion inner membrane. Its function is as follows. Component of the ubiquinol-cytochrome c oxidoreductase, a multisubunit transmembrane complex that is part of the mitochondrial electron transport chain which drives oxidative phosphorylation. The respiratory chain contains 3 multisubunit complexes succinate dehydrogenase (complex II, CII), ubiquinol-cytochrome c oxidoreductase (cytochrome b-c1 complex, complex III, CIII) and cytochrome c oxidase (complex IV, CIV), that cooperate to transfer electrons derived from NADH and succinate to molecular oxygen, creating an electrochemical gradient over the inner membrane that drives transmembrane transport and the ATP synthase. The cytochrome b-c1 complex catalyzes electron transfer from ubiquinol to cytochrome c, linking this redox reaction to translocation of protons across the mitochondrial inner membrane, with protons being carried across the membrane as hydrogens on the quinol. In the process called Q cycle, 2 protons are consumed from the matrix, 4 protons are released into the intermembrane space and 2 electrons are passed to cytochrome c. The chain is Cytochrome b-c1 complex subunit 8 (qcr8) from Neurospora crassa (strain ATCC 24698 / 74-OR23-1A / CBS 708.71 / DSM 1257 / FGSC 987).